Consider the following 312-residue polypeptide: Glycerol-3-phosphate dehydrogenase [NAD(P)+] (312 aa).

Positions 11, 30, 31, and 95 each coordinate NADPH. 3 residues coordinate sn-glycerol 3-phosphate: Lys-95, Gly-123, and Ser-125. Ala-127 contributes to the NADPH binding site. Sn-glycerol 3-phosphate-binding residues include Lys-177, Asp-230, Ser-240, Arg-241, and Asn-242. Lys-177 functions as the Proton acceptor in the catalytic mechanism. Residue Arg-241 coordinates NADPH. NADPH-binding residues include Val-265 and Glu-267.

It belongs to the NAD-dependent glycerol-3-phosphate dehydrogenase family.

Its subcellular location is the cytoplasm. The catalysed reaction is sn-glycerol 3-phosphate + NAD(+) = dihydroxyacetone phosphate + NADH + H(+). It carries out the reaction sn-glycerol 3-phosphate + NADP(+) = dihydroxyacetone phosphate + NADPH + H(+). It participates in membrane lipid metabolism; glycerophospholipid metabolism. Catalyzes the reduction of the glycolytic intermediate dihydroxyacetone phosphate (DHAP) to sn-glycerol 3-phosphate (G3P), the key precursor for phospholipid synthesis. In Helicobacter acinonychis (strain Sheeba), this protein is Glycerol-3-phosphate dehydrogenase [NAD(P)+].